The following is a 363-amino-acid chain: Large ribosomal subunit protein uL4A (363 aa).

Residue serine 87 is modified to Phosphoserine. Residues 280–363 (PENIISNADV…EKFLTVLHEN (84 aa)) form a C-terminal-extended nuclear localization signal region.

Belongs to the universal ribosomal protein uL4 family. Component of the large ribosomal subunit (LSU). Mature yeast ribosomes consist of a small (40S) and a large (60S) subunit. The 40S small subunit contains 1 molecule of ribosomal RNA (18S rRNA) and at least 33 different proteins. The large 60S subunit contains 3 rRNA molecules (25S, 5.8S and 5S rRNA) and at least 46 different proteins. uL4 is associated with the polypeptide exit tunnel. uL4 interacts with its chaperone ACL4 and the nuclear import receptor KAP104.

It is found in the cytoplasm. It localises to the nucleus. In terms of biological role, component of the ribosome, a large ribonucleoprotein complex responsible for the synthesis of proteins in the cell. The small ribosomal subunit (SSU) binds messenger RNAs (mRNAs) and translates the encoded message by selecting cognate aminoacyl-transfer RNA (tRNA) molecules. The large subunit (LSU) contains the ribosomal catalytic site termed the peptidyl transferase center (PTC), which catalyzes the formation of peptide bonds, thereby polymerizing the amino acids delivered by tRNAs into a polypeptide chain. The nascent polypeptides leave the ribosome through a tunnel in the LSU and interact with protein factors that function in enzymatic processing, targeting, and the membrane insertion of nascent chains at the exit of the ribosomal tunnel. uL4 participates in the regulation of the accumulation of its own mRNA. In Schizosaccharomyces pombe (strain 972 / ATCC 24843) (Fission yeast), this protein is Large ribosomal subunit protein uL4A (rpl402).